We begin with the raw amino-acid sequence, 405 residues long: Dematin (405 aa).

4 disordered regions span residues 1–30 (MERL…PSSI), 79–158 (PRSR…GSPQ), 173–192 (FPAA…TDYW), and 203–332 (TEWR…DRGN). Residues 11–29 (SPGSVSPSRDSSVPGSPSS) are compositionally biased toward low complexity. 9 positions are modified to phosphoserine: S16, S18, S26, S92, S96, S105, S110, S113, and S156. Residues 108-123 (IISQASAPRTTGTPRT) show a composition bias toward polar residues. The span at 216–227 (EEEEEEEDDDSG) shows a compositional bias: acidic residues. The tract at residues 224 to 308 (DDSGEEMKAL…SRLQSTEFSP (85 aa)) is interaction with RASGRF2. S226 carries the post-translational modification Phosphoserine. Composition is skewed to basic and acidic residues over residues 228–242 (EEMK…EELS) and 252–261 (ILKEEMEKSL). A phosphoserine mark is found at S269, S279, S289, S303, S315, S333, S372, and S383. The segment covering 276-322 (FHTSLHQGTSKSSSLPAYGRTTLSRLQSTEFSPSGSETGSPGLQNGE) has biased composition (polar residues). An HP domain is found at 337 to 405 (VLEQKIYPYE…NELKKKASLF (69 aa)). Residue S403 is modified to Phosphoserine; by PKA.

It belongs to the villin/gelsolin family. As to quaternary structure, monomeric (isoform 2); under reducing conditions. Self-associates. Exists under oxidizing condition as a trimer of two isoforms 2 and isoform 1 linked by disulfide bonds. Found in a complex with DMTN, F-actin and spectrin. Found in a complex with ADD2, DMTN and SLC2A1. Interacts with F-actin, ITPKB, RASGRF2 and spectrin. Isoform 2 interacts with SLC2A1 (via C-terminus cytoplasmic region). Isoform 1 and isoform 2 interact (phosphorylated form) with plasmodium berghei 14-3-3 protein; the interaction occurs in a PKA-dependent manner. In terms of processing, phosphorylated. Phosphorylation at Ser-403 by PKA causes the C-terminal headpiece domain to associate with the N-terminal core domain, and leads to the inhibition of its actin bundling activity. Post-translationally, the N-terminus is blocked. In terms of tissue distribution, expressed in platelets (at protein level). Expressed in heart, brain, lung, skeletal muscle, and kidney.

The protein resides in the cytoplasm. The protein localises to the cytosol. Its subcellular location is the perinuclear region. It localises to the cytoskeleton. It is found in the cell membrane. The protein resides in the membrane. The protein localises to the endomembrane system. Its subcellular location is the cell projection. Its function is as follows. Membrane-cytoskeleton-associated protein with F-actin-binding activity that induces F-actin bundles formation and stabilization. Its F-actin-bundling activity is reversibly regulated upon its phosphorylation by the cAMP-dependent protein kinase A (PKA). Binds to the erythrocyte membrane glucose transporter-1 SLC2A1/GLUT1, and hence stabilizes and attaches the spectrin-actin network to the erythrocytic plasma membrane. Plays a role in maintaining the functional integrity of PKA-activated erythrocyte shape and the membrane mechanical properties. Also plays a role as a modulator of actin dynamics in fibroblasts; acts as a negative regulator of the RhoA activation pathway. In platelets, functions as a regulator of internal calcium mobilization across the dense tubular system that affects platelet granule secretion pathways and aggregation. Also required for the formation of a diverse set of cell protrusions, such as filopodia and lamellipodia, necessary for platelet cell spreading, motility and migration. Acts as a tumor suppressor and inhibits malignant cell transformation. The polypeptide is Dematin (DMTN) (Homo sapiens (Human)).